The following is a 718-amino-acid chain: Ophiobolin F synthase oblA (718 aa).

The (7Z)-ophiobola-7,19-dien-3-ol synthase stretch occupies residues 1–320 (MACKYSTLID…RYNGPTKFNE (320 aa)). Residues D93 and D97 each contribute to the Mg(2+) site. D93 is a substrate binding site. Residues 93 to 97 (DDVID) carry the DDXXD 1 motif. Substrate contacts are provided by residues 180–183 (RALD), N224, 228–232 (SFEKE), and 311–312 (RY). The short motif at 224 to 232 (NDLFSFEKE) is the NSE/DTE element. A geranylfarnesyl diphosphate synthase region spans residues 321 to 718 (LQLLRSEHGL…LRVMLELLKV (398 aa)). The segment at 346–391 (LVEGDCHESKPNELKRKRNGVSVDDEMRTNGTNGAKKPAHVSQPST) is disordered. Positions 349–359 (GDCHESKPNEL) are enriched in basic and acidic residues. 3 residues coordinate isopentenyl diphosphate: K429, R432, and H461. The Mg(2+) site is built by D468 and D472. Positions 468–472 (DDLED) match the DDXXD 2 motif. R477 contacts dimethylallyl diphosphate. Residue R478 participates in isopentenyl diphosphate binding. Residues K555, T556, Q594, N601, K611, and K621 each coordinate dimethylallyl diphosphate.

The protein in the N-terminal section; belongs to the terpene synthase family. It in the C-terminal section; belongs to the FPP/GGPP synthase family. Mg(2+) serves as cofactor.

The catalysed reaction is isopentenyl diphosphate + (2E,6E)-farnesyl diphosphate = (2E,6E,10E)-geranylgeranyl diphosphate + diphosphate. It carries out the reaction isopentenyl diphosphate + (2E,6E,10E)-geranylgeranyl diphosphate = (2E,6E,10E,14E)-geranylfarnesyl diphosphate + diphosphate. The enzyme catalyses (2E,6E,10E,14E)-geranylfarnesyl diphosphate + H2O = ophiobolin F + diphosphate. It participates in secondary metabolite biosynthesis; terpenoid biosynthesis. Its function is as follows. Bifunctional sesterterpene synthase; part of the gene cluster that mediates the biosynthesis of the sesterterpenes ophiobolins, fungal phytotoxins with potential anti-cancer activities. The first step of the pathway is performed by the sesterterpene synthase oblA that possesses both prenyl transferase and terpene cyclase activity, converting isopentenyl diphosphate and dimethylallyl diphosphate into geranylfarnesyl diphosphate (GFPP) and further converting GFPP into ophiobolin F, respectively. Other sesterterpenoids (C(25) terpenoids) are found as minor products of oblA. It is expected that ophiobolin F is then oxidized to ophiobolin A via ophiobolin C and ophiobolin B intermediates by the combined action of the cytochrome P450 monooxygenase oblB and the FAD-dependent oxidoreductase oblC. Although oblB catalyzes multistep oxygenations at C5 and C21/C7 in a relatively efficient manner, it is unable to convert ophiobolin F to ophiobolin C and produces instead several unexpected derivatives. This Aspergillus clavatus (strain ATCC 1007 / CBS 513.65 / DSM 816 / NCTC 3887 / NRRL 1 / QM 1276 / 107) protein is Ophiobolin F synthase oblA.